Here is a 684-residue protein sequence, read N- to C-terminus: Endo-1,4-beta-xylanase A (684 aa).

The first 34 residues, 1 to 34 (MMRSLKSRKLVFILAMLFLINAIVSLKFITYSSA), serve as a signal peptide directing secretion. 2 consecutive CBM-cenC domains span residues 40-190 (KSKY…IKDL) and 193-342 (AYVL…ISDE). One can recognise a GH10 domain in the interval 350–678 (DYNLPSLCEK…KFAFWSLIDP (329 aa)). Catalysis depends on E490, which acts as the Proton donor. Residue E598 is the Nucleophile of the active site.

It belongs to the glycosyl hydrolase 10 (cellulase F) family.

The catalysed reaction is Endohydrolysis of (1-&gt;4)-beta-D-xylosidic linkages in xylans.. Its pathway is glycan degradation; xylan degradation. This chain is Endo-1,4-beta-xylanase A (xynA), found in Caldicellulosiruptor sp. (strain Rt8B.4).